Consider the following 67-residue polypeptide: MSLLPVMVIFGLSFPPIFLELLISLALFFVVRRILQPTGIYEFVWHPALFNTALYCCLFYLTSRLFS.

2 consecutive transmembrane segments (helical) span residues 3–23 (LLPV…ELLI) and 39–59 (GIYE…CCLF).

This sequence belongs to the AaeX family.

The protein localises to the cell membrane. This chain is Protein AaeX, found in Yersinia pseudotuberculosis serotype O:1b (strain IP 31758).